The sequence spans 337 residues: Pentalenene synthase (337 aa).

2 residues coordinate Mg(2+): aspartate 80 and aspartate 84. Residues 80–84 (DDLFD) carry the DDXXD motif motif. Cysteine 128 and cysteine 136 are disulfide-bonded. Residues asparagine 219, serine 223, and glutamate 227 each coordinate Mg(2+).

It belongs to the terpene synthase family. As to quaternary structure, monomer. Requires Mg(2+) as cofactor.

It catalyses the reaction (2E,6E)-farnesyl diphosphate = pentalenene + diphosphate. It functions in the pathway sesquiterpene biosynthesis; pentalenene biosynthesis; pentalenene from farnesyl diphosphate: step 1/1. The protein operates within antibiotic biosynthesis; pentalenolactone biosynthesis. Its function is as follows. Catalyzes the cyclization of farnesyl diphosphate (FPP) to the tricyclic sesquiterpene pentalenene, which is the hydrocarbon precursor of the pentalenolactone family of antibiotics produced by a variety of Streptomyces species. The chain is Pentalenene synthase (penA) from Streptomyces exfoliatus (Streptomyces hydrogenans).